The primary structure comprises 196 residues: ATP synthase subunit b 2 (196 aa).

Low complexity predominate over residues methionine 1–alanine 18. Residues methionine 1–phenylalanine 33 form a disordered region. The chain crosses the membrane as a helical span at residues phenylalanine 41 to serine 60.

Belongs to the ATPase B chain family. In terms of assembly, F-type ATPases have 2 components, F(1) - the catalytic core - and F(0) - the membrane proton channel. F(1) has five subunits: alpha(3), beta(3), gamma(1), delta(1), epsilon(1). F(0) has three main subunits: a(1), b(2) and c(10-14). The alpha and beta chains form an alternating ring which encloses part of the gamma chain. F(1) is attached to F(0) by a central stalk formed by the gamma and epsilon chains, while a peripheral stalk is formed by the delta and b chains.

Its subcellular location is the cell inner membrane. In terms of biological role, f(1)F(0) ATP synthase produces ATP from ADP in the presence of a proton or sodium gradient. F-type ATPases consist of two structural domains, F(1) containing the extramembraneous catalytic core and F(0) containing the membrane proton channel, linked together by a central stalk and a peripheral stalk. During catalysis, ATP synthesis in the catalytic domain of F(1) is coupled via a rotary mechanism of the central stalk subunits to proton translocation. Component of the F(0) channel, it forms part of the peripheral stalk, linking F(1) to F(0). The b'-subunit is a diverged and duplicated form of b found in plants and photosynthetic bacteria. In Azorhizobium caulinodans (strain ATCC 43989 / DSM 5975 / JCM 20966 / LMG 6465 / NBRC 14845 / NCIMB 13405 / ORS 571), this protein is ATP synthase subunit b 2 (atpF2).